Consider the following 185-residue polypeptide: Peptidyl-tRNA hydrolase (185 aa).

Position 14 (Tyr-14) interacts with tRNA. The active-site Proton acceptor is His-19. TRNA contacts are provided by Phe-64, Asn-66, and Asn-112.

Belongs to the PTH family. In terms of assembly, monomer.

Its subcellular location is the cytoplasm. The catalysed reaction is an N-acyl-L-alpha-aminoacyl-tRNA + H2O = an N-acyl-L-amino acid + a tRNA + H(+). In terms of biological role, hydrolyzes ribosome-free peptidyl-tRNAs (with 1 or more amino acids incorporated), which drop off the ribosome during protein synthesis, or as a result of ribosome stalling. Functionally, catalyzes the release of premature peptidyl moieties from peptidyl-tRNA molecules trapped in stalled 50S ribosomal subunits, and thus maintains levels of free tRNAs and 50S ribosomes. The sequence is that of Peptidyl-tRNA hydrolase from Levilactobacillus brevis (strain ATCC 367 / BCRC 12310 / CIP 105137 / JCM 1170 / LMG 11437 / NCIMB 947 / NCTC 947) (Lactobacillus brevis).